The sequence spans 308 residues: 1,4-dihydroxy-2-naphthoate octaprenyltransferase (308 aa).

Residues 1-20 (MTEQQISRTQAWLESLRPKT) are Cytoplasmic-facing. A helical transmembrane segment spans residues 21-41 (LPLAFAAIIVGTALAWWQGHF). Residue Asp42 is a topological domain, periplasmic. The helical transmembrane segment at 43–63 (PLVALLALITAGLLQILSNLA) threads the bilayer. Residues 64–97 (NDYGDAVKGSDKPDRIGPLRGMQKGVITQQEMKR) lie on the Cytoplasmic side of the membrane. The chain crosses the membrane as a helical span at residues 98 to 118 (ALIITVVLICLSGLALVAVAC). Over 119 to 123 (HTLAD) the chain is Periplasmic. A helical membrane pass occupies residues 124–144 (FVGFLILGGLSIIAAITYTVG). The Cytoplasmic portion of the chain corresponds to 145-148 (NRPY). The helical transmembrane segment at 149-169 (GYIGLGDISVLVFFGWLSVMG) threads the bilayer. At 170 to 176 (SWYLQAH) the chain is on the periplasmic side. Residues 177–197 (TLIPALILPATACGLLATAVL) form a helical membrane-spanning segment. The Cytoplasmic segment spans residues 198–227 (NINNLRDINSDRENGKNTLVVRLGEVNARR). A helical membrane pass occupies residues 228 to 247 (YHACLLMGSLVCLALFNLFS). Topologically, residues 248–250 (LHS) are periplasmic. The chain crosses the membrane as a helical span at residues 251–270 (LWGWLFLLAAPLLVKQARYV). The Cytoplasmic segment spans residues 271 to 286 (MREMDPVAMRPMLERT). The chain crosses the membrane as a helical span at residues 287–307 (VKGALLTNLLFVLGIFLSQWA). Position 308 (Ala308) is a topological domain, periplasmic.

It belongs to the MenA family. Type 1 subfamily.

The protein localises to the cell inner membrane. It catalyses the reaction an all-trans-polyprenyl diphosphate + 1,4-dihydroxy-2-naphthoate + H(+) = a 2-demethylmenaquinol + CO2 + diphosphate. It participates in quinol/quinone metabolism; menaquinone biosynthesis; menaquinol from 1,4-dihydroxy-2-naphthoate: step 1/2. In terms of biological role, conversion of 1,4-dihydroxy-2-naphthoate (DHNA) to demethylmenaquinone (DMK). Attaches octaprenylpyrophosphate, a membrane-bound 40-carbon side chain to DHNA. The conversion of DHNA to DMK proceeds in three stages: the removal of the carboxyl group of DHNA as CO(2), the attachment of the isoprenoid side chain, and a quinol-to-quinone oxidation, which is thought to be spontaneous. The polypeptide is 1,4-dihydroxy-2-naphthoate octaprenyltransferase (Escherichia coli (strain K12)).